The following is a 323-amino-acid chain: PI-PLC X domain-containing protein 1 (323 aa).

The PI-PLC X-box domain maps to 30 to 206 (RLWDVPLHHL…QVIVSYEDES (177 aa)).

As to expression, widely expressed.

It is found in the cytoplasm. The sequence is that of PI-PLC X domain-containing protein 1 (PLCXD1) from Homo sapiens (Human).